The primary structure comprises 577 residues: Steryl-sulfatase (577 aa).

The N-terminal stretch at 1–19 is a signal peptide; the sequence is MLWPCLLALLLSQLNFLCA. Residues 21 to 183 lie on the Lumenal side of the membrane; the sequence is RPGPGPNFLL…GTVFGSAQQV (163 aa). Residues aspartate 34 and aspartate 35 each coordinate Ca(2+). A glycan (N-linked (GlcNAc...) asparagine) is linked at asparagine 46. Cysteine 74 serves as a coordination point for Ca(2+). Cysteine 74 acts as the Nucleophile in catalysis. 3-oxoalanine (Cys) is present on cysteine 74. Histidine 135 is an active-site residue. 2 disulfides stabilise this stretch: cysteine 140/cysteine 147 and cysteine 169/cysteine 241. A helical membrane pass occupies residues 184 to 207; the sequence is FVVLPMNILGAVLLAMALARWAGL. The Cytoplasmic portion of the chain corresponds to 208-211; sequence ARPP. A helical membrane pass occupies residues 212–233; sequence GWVFGVTVAAMAAVGGAYVAFL. Residues 234–577 are Lumenal-facing; the sequence is YHFRPANCFL…PLACRCAGDG (344 aa). An N-linked (GlcNAc...) asparagine glycan is attached at asparagine 332. Ca(2+)-binding residues include aspartate 341 and histidine 342. Cystine bridges form between cysteine 445–cysteine 488, cysteine 480–cysteine 486, and cysteine 561–cysteine 571. Asparagine 458 carries N-linked (GlcNAc...) asparagine glycosylation.

Belongs to the sulfatase family. Homodimer. It depends on Ca(2+) as a cofactor. The conversion to 3-oxoalanine (also known as C-formylglycine, FGly), of a serine or cysteine residue in prokaryotes and of a cysteine residue in eukaryotes, is critical for catalytic activity.

Its subcellular location is the microsome membrane. The protein localises to the endoplasmic reticulum membrane. The catalysed reaction is dehydroepiandrosterone 3-sulfate + H2O = 3beta-hydroxyandrost-5-en-17-one + sulfate + H(+). It carries out the reaction estrone 3-sulfate + H2O = estrone + sulfate + H(+). In terms of biological role, catalyzes the conversion of sulfated steroid precursors, such as dehydroepiandrosterone sulfate (DHEA-S) and estrone sulfate to the free steroid. The protein is Steryl-sulfatase (Sts) of Rattus norvegicus (Rat).